Consider the following 422-residue polypeptide: Oxysterol-binding protein 7 (422 aa).

The segment at 283–313 (EAAPASSASKKEKKKEKKKAKHSKHTCSPSD) is disordered. Over residues 293–307 (KEKKKEKKKAKHSKH) the composition is skewed to basic residues. A coiled-coil region spans residues 354-384 (MQAADQIKKEIEDEQRKRLQITKEEEKKERA). The disordered stretch occupies residues 402-422 (TLAPVSNSTSSTASDAASGSN). The span at 407–422 (SNSTSSTASDAASGSN) shows a compositional bias: low complexity.

Belongs to the OSBP family.

This Dictyostelium discoideum (Social amoeba) protein is Oxysterol-binding protein 7 (osbG).